Here is a 276-residue protein sequence, read N- to C-terminus: Radial spoke head protein 9 homolog (276 aa).

This sequence belongs to the flagellar radial spoke RSP9 family. Component of the axonemal radial spoke 1 (RS1) and 2 (RS2) complexes, at least composed of spoke head proteins RSPH1, RSPH3, RSPH9 and the cilia-specific component RSPH4A or sperm-specific component RSPH6A, spoke stalk proteins RSPH14, DNAJB13, DYDC1, ROPN1L and NME5, and the RS1 complex-specific anchor protein IQUB. Interacts with IQUB. Interacts with RSPH3B. Interacts with RSPH4A. Interacts with RSPH6A. Interacts with CFAP61. Interacts with LRRC23.

The protein localises to the cytoplasm. Its subcellular location is the cytoskeleton. It is found in the cilium axoneme. It localises to the flagellum axoneme. The protein resides in the cell projection. The protein localises to the kinocilium. Its function is as follows. Functions as part of axonemal radial spoke complexes that play an important part in the motility of sperm and cilia. Essential for both the radial spoke head assembly and the central pair microtubule stability in ependymal motile cilia. Required for motility of olfactory and neural cilia and for the structural integrity of ciliary axonemes in both 9+0 and 9+2 motile cilia. In Homo sapiens (Human), this protein is Radial spoke head protein 9 homolog (RSPH9).